The following is a 235-amino-acid chain: Succinate dehydrogenase iron-sulfur subunit (235 aa).

3 residues coordinate [2Fe-2S] cluster: cysteine 53, cysteine 58, and cysteine 73. The 4Fe-4S ferredoxin-type domain maps to 133–163; sequence ERAKLDGLYECILCACCSSSCPSYWWNPDKF. Residues cysteine 143, cysteine 146, and cysteine 149 each contribute to the [4Fe-4S] cluster site. Cysteine 153 is a binding site for [3Fe-4S] cluster. Tryptophan 158 serves as a coordination point for a ubiquinone. Residues cysteine 200 and cysteine 206 each coordinate [3Fe-4S] cluster. Residue cysteine 210 participates in [4Fe-4S] cluster binding.

It belongs to the succinate dehydrogenase/fumarate reductase iron-sulfur protein family. Part of an enzyme complex containing four subunits: a flavoprotein, an iron-sulfur protein, cytochrome b-556 and a hydrophobic protein. The cofactor is [2Fe-2S] cluster. [3Fe-4S] cluster serves as cofactor. [4Fe-4S] cluster is required as a cofactor.

The enzyme catalyses a quinone + succinate = fumarate + a quinol. It functions in the pathway carbohydrate metabolism; tricarboxylic acid cycle; fumarate from succinate (bacterial route): step 1/1. The sequence is that of Succinate dehydrogenase iron-sulfur subunit (sdhB) from Coxiella burnetii (strain RSA 493 / Nine Mile phase I).